A 131-amino-acid chain; its full sequence is Small ribosomal subunit protein uS8 (131 aa).

It belongs to the universal ribosomal protein uS8 family. Part of the 30S ribosomal subunit. Contacts proteins S5 and S12.

In terms of biological role, one of the primary rRNA binding proteins, it binds directly to 16S rRNA central domain where it helps coordinate assembly of the platform of the 30S subunit. The sequence is that of Small ribosomal subunit protein uS8 from Wolbachia pipientis wMel.